Consider the following 185-residue polypeptide: Elongation factor P (185 aa).

This sequence belongs to the elongation factor P family.

It is found in the cytoplasm. Its pathway is protein biosynthesis; polypeptide chain elongation. Functionally, involved in peptide bond synthesis. Stimulates efficient translation and peptide-bond synthesis on native or reconstituted 70S ribosomes in vitro. Probably functions indirectly by altering the affinity of the ribosome for aminoacyl-tRNA, thus increasing their reactivity as acceptors for peptidyl transferase. This is Elongation factor P from Burkholderia multivorans (strain ATCC 17616 / 249).